We begin with the raw amino-acid sequence, 484 residues long: MSERIRVRYAPSPTGYLHIGNARTALFNYLFAKHYDGDFVVRIEDTDSKRNLEDGESSQFDNLKWLGLDWDESIDKDKGYGPYRQSERGDIYNPLIQQLLDEDKAYKCYMTEEELEKEREDQIARGEMPRYGGQHAHLTEEERQQFEAEGRRPSIRFRVPQDQTYTFNDMVKGEISFDSNNIGDWVIVKKDGIPTYNFAVAIDDYYMGISDVIRGDDHVSNTPKQLMIYEAFGWEAPRFGHMSLIVNEERKKLSKRDGQILQFIEQYRDLGYLPEALFNFITLLGWSPEGEEEIFSKEEFIKIFDEKRLSKSPAMFDRQKLAWVNNQYMKTKDTDTVFELALPHLIKANLIPESPSEDDKEWGRKLVALYQKEMSYAGEIVPLSEMFFHEMPELGEEEQEVINGEQVPELMTHLYGKLEALEPFEAADIKKTIKEVQKETGIKGKQLFMPIRVAVTGQMHGPELPNTIEVLGKDKVLSRLKKFV.

The short motif at 11-21 is the 'HIGH' region element; that stretch reads PSPTGYLHIGN. The short motif at 252–256 is the 'KMSKS' region element; sequence KLSKR. Lys255 is a binding site for ATP.

This sequence belongs to the class-I aminoacyl-tRNA synthetase family. Glutamate--tRNA ligase type 1 subfamily. Monomer.

Its subcellular location is the cytoplasm. It catalyses the reaction tRNA(Glu) + L-glutamate + ATP = L-glutamyl-tRNA(Glu) + AMP + diphosphate. Functionally, catalyzes the attachment of glutamate to tRNA(Glu) in a two-step reaction: glutamate is first activated by ATP to form Glu-AMP and then transferred to the acceptor end of tRNA(Glu). The sequence is that of Glutamate--tRNA ligase from Staphylococcus haemolyticus (strain JCSC1435).